Reading from the N-terminus, the 721-residue chain is Probable acyl-activating enzyme 17, peroxisomal (721 aa).

The Microbody targeting signal motif lies at 719–721; the sequence is SKL.

Belongs to the ATP-dependent AMP-binding enzyme family. As to expression, expressed in leaves, stems and developing seeds.

The protein localises to the peroxisome. In terms of biological role, may act as an acid--thiol ligase that activates carboxylic acids by forming acyl-CoAs. The chain is Probable acyl-activating enzyme 17, peroxisomal (AAE17) from Arabidopsis thaliana (Mouse-ear cress).